A 583-amino-acid polypeptide reads, in one-letter code: MAEKGDCIASVYGYDLGGRFIDFQPLGFGVNGLVLSATDSRACRKVAVKKIVLSDARSMKHALREIKIIRRLDHDNIVKVYEVLGPKGSDLQGELFKFSVAYIVQEYMETDLACLLEQGTLTEDHAKLFMYQLLRGLKYIHSANVLHRDLKPANIFISTEDLVLKIGDFGLARIVDQHYSHKGYLSEGLVTKWYRSPRLLLSPNNYTKAIDMWAAGCILAEMLTGKMLFAGAHELEQMQLILDTIPVVREEDKEELLRVMPSFVSSTWEVKRPLRKLLPDVNSEAIDFLEKILTFNPMDRLTAEMGLQHPYMSPYSCPEDEPTSQHPFRIEDEIDDIVLMAASQSQLSNWDRYPVSLSSDLEWRPDRCQDASEVQRDPRAGSTPLAEDVQVDPRKDSQSSSERFLEQSHSSMERAFEADYGRSCDYKVGSPSYLDKLLWRDNKPHHYSEPKLILDLSHWKQAASAPPRAAVAADPVSREDEPASLFLEIAQWVKSTQSGSERASPPPDAPEPRLSASPPGHPTPIDGGASPQFDLDVFISRALKLCTKPEDLPENKLGDLNGACISEHPGDLVQTEAFSKERW.

The Protein kinase domain occupies 20 to 312 (FIDFQPLGFG…AEMGLQHPYM (293 aa)). ATP contacts are provided by residues 26–34 (LGFGVNGLV) and lysine 49. Aspartate 149 acts as the Proton acceptor in catalysis. Serine 186 bears the Phosphoserine; by PAK1, PAK2 and PAK3 mark. The short motif at 186-188 (SEG) is the SEG motif element. An FRIEDE motif motif is present at residues 328 to 333 (FRIEDE). Composition is skewed to basic and acidic residues over residues 366–379 (DRCQ…RDPR) and 391–410 (VDPR…QSHS). Residues 366–410 (DRCQDASEVQRDPRAGSTPLAEDVQVDPRKDSQSSSERFLEQSHS) are disordered. A Phosphoserine modification is found at serine 430. Residues 495–531 (STQSGSERASPPPDAPEPRLSASPPGHPTPIDGGASP) form a disordered region.

The protein belongs to the protein kinase superfamily. CMGC Ser/Thr protein kinase family. MAP kinase subfamily. As to quaternary structure, homodimer. Heterodimer with ERK3/MAPK6. Interacts with (via FRIEDE motif) MAPKAPK5. The cofactor is Mg(2+). Post-translationally, phosphorylated at Ser-186 by PAK1, PAK2 and PAK3 resulting in catalytic activation. Phosphorylated by MAPKAPK5 at other sites.

The protein localises to the cytoplasm. Its subcellular location is the nucleus. It carries out the reaction L-seryl-[protein] + ATP = O-phospho-L-seryl-[protein] + ADP + H(+). The enzyme catalyses L-threonyl-[protein] + ATP = O-phospho-L-threonyl-[protein] + ADP + H(+). Its activity is regulated as follows. Activated by phosphorylation at Ser-186. Its function is as follows. Atypical MAPK protein. Phosphorylates microtubule-associated protein 2 (MAP2) and MAPKAPK5. The precise role of the complex formed with MAPKAPK5 is still unclear, but the complex follows a complex set of phosphorylation events: upon interaction with atypical MAPKAPK5, ERK4/MAPK4 is phosphorylated at Ser-186 and then mediates phosphorylation and activation of MAPKAPK5, which in turn phosphorylates ERK4/MAPK4. May promote entry in the cell cycle. This is Mitogen-activated protein kinase 4 (Mapk4) from Mus musculus (Mouse).